The primary structure comprises 457 residues: Argininosuccinate lyase (457 aa).

The protein belongs to the lyase 1 family. Argininosuccinate lyase subfamily.

Its subcellular location is the cytoplasm. The enzyme catalyses 2-(N(omega)-L-arginino)succinate = fumarate + L-arginine. It participates in amino-acid biosynthesis; L-arginine biosynthesis; L-arginine from L-ornithine and carbamoyl phosphate: step 3/3. This is Argininosuccinate lyase from Psychrobacter cryohalolentis (strain ATCC BAA-1226 / DSM 17306 / VKM B-2378 / K5).